Reading from the N-terminus, the 503-residue chain is NAD(P)H-quinone oxidoreductase chain 4, chloroplastic (503 aa).

The next 13 helical transmembrane spans lie at 4–24, 37–57, 87–107, 134–154, 167–187, 208–228, 242–262, 272–292, 305–325, 330–350, 386–406, 416–436, and 462–482; these read FPWL…IFFL, ICIC…HFQL, IGPT…AWPV, LLLF…LLSM, FILY…GMGL, ALEI…SPII, HYST…YGLV, AHSI…IYAA, IAYS…SITD, GAIL…FLAG, LALP…GIIT, ILIT…SLSM, and LFVS…PDFV.

This sequence belongs to the complex I subunit 4 family.

It localises to the plastid. It is found in the chloroplast thylakoid membrane. It carries out the reaction a plastoquinone + NADH + (n+1) H(+)(in) = a plastoquinol + NAD(+) + n H(+)(out). The enzyme catalyses a plastoquinone + NADPH + (n+1) H(+)(in) = a plastoquinol + NADP(+) + n H(+)(out). This Drimys granadensis protein is NAD(P)H-quinone oxidoreductase chain 4, chloroplastic.